Here is an 898-residue protein sequence, read N- to C-terminus: Serine/threonine-protein kinase TAO3 (898 aa).

The Protein kinase domain maps to 24-277 (FIGLHEIGHG…SAELLRHDFV (254 aa)). ATP is bound by residues 30 to 38 (IGHGSFGAV) and Lys-53. The active-site Proton acceptor is Asp-147. Disordered stretches follow at residues 316–362 (TRNG…SQSS) and 405–425 (DEAG…VQSQ). The residue at position 324 (Ser-324) is a Phosphoserine; by ATM. 4 positions are modified to phosphoserine: Ser-331, Ser-343, Ser-346, and Ser-349. Positions 334 to 351 (GTSLNREMDSLGSNHSIP) are enriched in polar residues. Low complexity predominate over residues 352–362 (SMSVSTGSQSS). Residue Thr-357 is modified to Phosphothreonine. Ser-359 is subject to Phosphoserine. Residues 405–416 (DEAGHGDPRPEP) are compositionally biased toward basic and acidic residues. Residue Ser-442 is modified to Phosphoserine. Coiled coils occupy residues 452–502 (EQEN…THAN), 548–649 (FLES…HAML), and 754–879 (LKTL…DMES). Residues 565-596 (EEMNEDHSTPKKEKQERISKHKENLQHTQAEE) are disordered. Lys-830 bears the N6-acetyllysine mark.

The protein belongs to the protein kinase superfamily. STE Ser/Thr protein kinase family. STE20 subfamily. In terms of assembly, self-associates. Interacts with ERN1 and TRAF2. Interaction with TRAF2 is facilitated under ER stress conditions, such as treatment with tunicamycin, and may promote TRAF2 phosphorylation. Interacts (via N-terminus) with STK25; the interaction promotes STK25 abundance at the level of protein expression and/or stability. As to quaternary structure, (Microbial infection) Interacts with herpes simplex virus 1 UL37 protein. Post-translationally, autophosphorylated. Phosphorylation at Ser-324 by ATM following DNA damage is required for activation of the p38/MAPK14 stress-activated MAPK cascade. Phosphorylated at Ser-324 and on Tyr residues during T cell activation. Phosphorylated by LRRK2. In terms of tissue distribution, ubiquitously expressed at a low level, and highly expressed in peripheral blood leukocytes (PBLs), thymus, spleen, kidney, skeletal muscle, heart and liver.

It localises to the cytoplasm. The protein localises to the cell membrane. It is found in the membrane raft. The protein resides in the lipid droplet. The catalysed reaction is L-seryl-[protein] + ATP = O-phospho-L-seryl-[protein] + ADP + H(+). It catalyses the reaction L-threonyl-[protein] + ATP = O-phospho-L-threonyl-[protein] + ADP + H(+). In terms of biological role, serine/threonine-protein kinase that acts as a regulator of the p38/MAPK14 stress-activated MAPK cascade and of the MAPK8/JNK cascade. In response to DNA damage, involved in the G2/M transition DNA damage checkpoint by activating the p38/MAPK14 stress-activated MAPK cascade, probably by mediating phosphorylation of upstream MAP2K3 and MAP2K6 kinases. Inhibits basal activity of the MAPK8/JNK cascade and diminishes its activation in response to epidermal growth factor (EGF). Positively regulates canonical T cell receptor (TCR) signaling by preventing early PTPN6/SHP1-mediated inactivation of LCK, ensuring sustained TCR signaling that is required for optimal activation and differentiation of T cells. Phosphorylates PTPN6/SHP1 on 'Thr-394', leading to its polyubiquitination and subsequent proteasomal degradation. Required for cell surface expression of metalloprotease ADAM10 on type 1 transitional B cells which is necessary for their NOTCH-mediated development into marginal zone B cells. Also required for the NOTCH-mediated terminal differentiation of splenic conventional type 2 dendritic cells. Positively regulates osteoblast differentiation by acting as an upstream activator of the JNK pathway. Promotes JNK signaling in hepatocytes and positively regulates hepatocyte lipid storage by inhibiting beta-oxidation and triacylglycerol secretion while enhancing lipid synthesis. Restricts age-associated inflammation by negatively regulating differentiation of macrophages and their production of pro-inflammatory cytokines. Plays a role in negatively regulating the abundance of regulatory T cells in white adipose tissue. In Homo sapiens (Human), this protein is Serine/threonine-protein kinase TAO3 (TAOK3).